Reading from the N-terminus, the 303-residue chain is GGSCGQCRVHIKEGGGDILPTELDHISKGEAREGCRLACQVNVKNDMEIELEESIFGVKKWDCEVISNDNKATFIKELKLQIPDGESVPFRAGGYIQIEAPAHHVKYADFDIPEEYRGDWNHFGFFDLESKVDEETIRAYSMANYPEEEGIIMLNVRIATPPPRNLSLPCGKMSSYIWSLKEGDKVTISGPFGEFFAKDTDAEMVFVGGGAGMAPMRSHIFDQLKRLNSKRKISFWYGARSKREMFYVEDFDGLAEQNENFVWHTALSDPQPEDNWEGYTGFIHNVLFENYLKDHEAPEDCEY.

Positions 1 to 55 (GGSCGQCRVHIKEGGGDILPTELDHISKGEAREGCRLACQVNVKNDMEIELEESI) constitute a 2Fe-2S ferredoxin-type domain. The [2Fe-2S] cluster site is built by Cys4, Cys7, and Cys39. The 141-residue stretch at 58–198 (VKKWDCEVIS…SGPFGEFFAK (141 aa)) folds into the FAD-binding FR-type domain. The interval 201–303 (DAEMVFVGGG…DHEAPEDCEY (103 aa)) is catalytic.

The protein belongs to the NqrF family. In terms of assembly, composed of six subunits; NqrA, NqrB, NqrC, NqrD, NqrE and NqrF. It depends on [2Fe-2S] cluster as a cofactor. Requires FAD as cofactor.

The protein resides in the cell inner membrane. The enzyme catalyses a ubiquinone + n Na(+)(in) + NADH + H(+) = a ubiquinol + n Na(+)(out) + NAD(+). NQR complex catalyzes the reduction of ubiquinone-1 to ubiquinol by two successive reactions, coupled with the transport of Na(+) ions from the cytoplasm to the periplasm. The first step is catalyzed by NqrF, which accepts electrons from NADH and reduces ubiquinone-1 to ubisemiquinone by a one-electron transfer pathway. The chain is Na(+)-translocating NADH-quinone reductase subunit F (nqrF) from Pseudoalteromonas haloplanktis (Alteromonas haloplanktis).